We begin with the raw amino-acid sequence, 203 residues long: Small ribosomal subunit protein uS5 (203 aa).

Basic and acidic residues predominate over residues 1–18 (MENNVKKETIVDSEKVEK). A disordered region spans residues 1–36 (MENNVKKETIVDSEKVEKQQPVTAPVVNKKENTQPK). Residues 49–112 (FEERVVKIKR…KNANNNLIKV (64 aa)) form the S5 DRBM domain.

This sequence belongs to the universal ribosomal protein uS5 family. In terms of assembly, part of the 30S ribosomal subunit. Contacts proteins S4 and S8.

In terms of biological role, with S4 and S12 plays an important role in translational accuracy. Functionally, located at the back of the 30S subunit body where it stabilizes the conformation of the head with respect to the body. The sequence is that of Small ribosomal subunit protein uS5 from Ureaplasma urealyticum serovar 10 (strain ATCC 33699 / Western).